The primary structure comprises 188 residues: Photosystem I assembly protein Ycf4 (188 aa).

2 helical membrane passes run 26-46 (YFWA…GLSS) and 70-90 (LLFY…SLLW).

This sequence belongs to the Ycf4 family.

It localises to the cellular thylakoid membrane. Functionally, seems to be required for the assembly of the photosystem I complex. The sequence is that of Photosystem I assembly protein Ycf4 from Microcystis aeruginosa (strain NIES-843 / IAM M-2473).